A 281-amino-acid polypeptide reads, in one-letter code: Eukaryotic translation initiation factor 3 subunit G (281 aa).

The segment at 1–32 (MSRPAGRTDWAEEDDETELALPSQTVVKNKDG) is disordered. Residues 202–280 (ATLRVTNVSE…LILRVEFAKK (79 aa)) enclose the RRM domain.

The protein belongs to the eIF-3 subunit G family. As to quaternary structure, component of the eukaryotic translation initiation factor 3 (eIF-3) complex.

It localises to the cytoplasm. In terms of biological role, RNA-binding component of the eukaryotic translation initiation factor 3 (eIF-3) complex, which is involved in protein synthesis of a specialized repertoire of mRNAs and, together with other initiation factors, stimulates binding of mRNA and methionyl-tRNAi to the 40S ribosome. The eIF-3 complex specifically targets and initiates translation of a subset of mRNAs involved in cell proliferation. This subunit can bind 18S rRNA. The chain is Eukaryotic translation initiation factor 3 subunit G from Phaeosphaeria nodorum (strain SN15 / ATCC MYA-4574 / FGSC 10173) (Glume blotch fungus).